A 351-amino-acid polypeptide reads, in one-letter code: Hepatocyte nuclear factor 3-gamma (351 aa).

Residues P52–P73 are compositionally biased toward pro residues. Residues P52 to G94 form a disordered region. Residues A83–G94 are compositionally biased toward gly residues. A DNA-binding region (fork-head) is located at residues K118–K212. Positions E218–S275 are disordered. The segment covering S228–P251 has biased composition (low complexity).

It localises to the nucleus. Functionally, transcription activator for a number of liver genes such as AFP, albumin, tyrosine aminotransferase, PEPCK, etc. Interacts with the cis-acting regulatory regions of these genes. The protein is Hepatocyte nuclear factor 3-gamma (FOXA3) of Bos taurus (Bovine).